Consider the following 343-residue polypeptide: Protein RecA (343 aa).

64–71 provides a ligand contact to ATP; the sequence is GPESSGKT.

Belongs to the RecA family.

It is found in the cytoplasm. In terms of biological role, can catalyze the hydrolysis of ATP in the presence of single-stranded DNA, the ATP-dependent uptake of single-stranded DNA by duplex DNA, and the ATP-dependent hybridization of homologous single-stranded DNAs. It interacts with LexA causing its activation and leading to its autocatalytic cleavage. This is Protein RecA from Bacillus cereus (strain ATCC 10987 / NRS 248).